Here is a 633-residue protein sequence, read N- to C-terminus: Chaperone protein HtpG (633 aa).

The tract at residues methionine 1–arginine 345 is a; substrate-binding. The interval glutamate 346 to arginine 562 is b. The segment at leucine 563–glycine 633 is c.

This sequence belongs to the heat shock protein 90 family. Homodimer.

The protein localises to the cytoplasm. Functionally, molecular chaperone. Has ATPase activity. The sequence is that of Chaperone protein HtpG from Halorhodospira halophila (strain DSM 244 / SL1) (Ectothiorhodospira halophila (strain DSM 244 / SL1)).